Here is a 484-residue protein sequence, read N- to C-terminus: Bifunctional protein GlmU (484 aa).

The segment at 1–240 (MSASRPAAVM…RTEVEGVNDR (240 aa)) is pyrophosphorylase. Residues 12–15 (LAAG), K26, Q79, and 84–85 (GT) contribute to the UDP-N-acetyl-alpha-D-glucosamine site. D113 contacts Mg(2+). The UDP-N-acetyl-alpha-D-glucosamine site is built by G150, E165, N180, and N238. Residue N238 coordinates Mg(2+). Residues 241-261 (VQLAEARRLLNARLLEQLMRD) are linker. The segment at 262-484 (GVTVVDPAST…RARARSEEDR (223 aa)) is N-acetyltransferase. 2 residues coordinate UDP-N-acetyl-alpha-D-glucosamine: R343 and K361. H373 serves as the catalytic Proton acceptor. Residues Y376 and N387 each contribute to the UDP-N-acetyl-alpha-D-glucosamine site. Acetyl-CoA is bound by residues A390, 396-397 (NY), S415, and A433. The interval 457–484 (EGWVERKRPGTPAAQAAERARARSEEDR) is disordered. Positions 474–484 (ERARARSEEDR) are enriched in basic and acidic residues.

The protein in the N-terminal section; belongs to the N-acetylglucosamine-1-phosphate uridyltransferase family. This sequence in the C-terminal section; belongs to the transferase hexapeptide repeat family. Homotrimer. Requires Mg(2+) as cofactor.

It is found in the cytoplasm. The catalysed reaction is alpha-D-glucosamine 1-phosphate + acetyl-CoA = N-acetyl-alpha-D-glucosamine 1-phosphate + CoA + H(+). It catalyses the reaction N-acetyl-alpha-D-glucosamine 1-phosphate + UTP + H(+) = UDP-N-acetyl-alpha-D-glucosamine + diphosphate. Its pathway is nucleotide-sugar biosynthesis; UDP-N-acetyl-alpha-D-glucosamine biosynthesis; N-acetyl-alpha-D-glucosamine 1-phosphate from alpha-D-glucosamine 6-phosphate (route II): step 2/2. It functions in the pathway nucleotide-sugar biosynthesis; UDP-N-acetyl-alpha-D-glucosamine biosynthesis; UDP-N-acetyl-alpha-D-glucosamine from N-acetyl-alpha-D-glucosamine 1-phosphate: step 1/1. The protein operates within bacterial outer membrane biogenesis; LPS lipid A biosynthesis. Its function is as follows. Catalyzes the last two sequential reactions in the de novo biosynthetic pathway for UDP-N-acetylglucosamine (UDP-GlcNAc). The C-terminal domain catalyzes the transfer of acetyl group from acetyl coenzyme A to glucosamine-1-phosphate (GlcN-1-P) to produce N-acetylglucosamine-1-phosphate (GlcNAc-1-P), which is converted into UDP-GlcNAc by the transfer of uridine 5-monophosphate (from uridine 5-triphosphate), a reaction catalyzed by the N-terminal domain. The sequence is that of Bifunctional protein GlmU from Thermobifida fusca (strain YX).